Reading from the N-terminus, the 200-residue chain is Small ribosomal subunit protein uS4 (200 aa).

Positions 22-42 (TGKELQKRPYPPGQHGPGQRR) are disordered. Positions 92 to 152 (SRLDNLVYRL…EKSRNLQVIK (61 aa)) constitute an S4 RNA-binding domain.

Belongs to the universal ribosomal protein uS4 family. Part of the 30S ribosomal subunit. Contacts protein S5. The interaction surface between S4 and S5 is involved in control of translational fidelity.

Functionally, one of the primary rRNA binding proteins, it binds directly to 16S rRNA where it nucleates assembly of the body of the 30S subunit. With S5 and S12 plays an important role in translational accuracy. The protein is Small ribosomal subunit protein uS4 of Geobacillus kaustophilus (strain HTA426).